The following is a 752-amino-acid chain: Myb-related protein A (752 aa).

Residues 1–22 (MAKRSRSEDEDDDLQYADHDYE) form a disordered region. 3 HTH myb-type domains span residues 30–81 (KKLW…QKVL), 82–137 (NPEL…NPEV), and 138–188 (KKSS…RRKV). 3 DNA-binding regions (H-T-H motif) span residues 58–81 (WTLI…QKVL), 110–133 (WSLI…HNHL), and 161–184 (WAEI…NSTM). Lys-199 participates in a covalent cross-link: Glycyl lysine isopeptide (Lys-Gly) (interchain with G-Cter in SUMO2). Positions 230–295 (IPGYQYVSPE…RIPSQPGSFS (66 aa)) are transcriptional activation domain. The tract at residues 298–553 (SGSFLMDDNM…IRRSILGTTP (256 aa)) is negative regulatory domain. At Lys-394 the chain carries N6-acetyllysine. A disordered region spans residues 451–480 (RKMRVGHSPGSELRDGSLNDGGNMALKHTP). Glycyl lysine isopeptide (Lys-Gly) (interchain with G-Cter in SUMO2) cross-links involve residues Lys-592 and Lys-602.

In terms of assembly, component of the DREAM complex (also named LINC complex) at least composed of E2F4, E2F5, LIN9, LIN37, LIN52, LIN54, MYBL1, MYBL2, RBL1, RBL2, RBBP4, TFDP1 and TFDP2. The complex exists in quiescent cells where it represses cell cycle-dependent genes. It dissociates in S phase when LIN9, LIN37, LIN52 and LIN54 form a subcomplex that binds to MYBL2. In terms of tissue distribution, expressed in a variety of lymphoid and solid tumor lines cultured in vitro.

The protein resides in the nucleus. Its function is as follows. Transcription factor that specifically recognizes the sequence 5'-YAAC[GT]G-3'. Acts as a master regulator of male meiosis by promoting expression of piRNAs: activates expression of both piRNA precursor RNAs and expression of protein-coding genes involved in piRNA metabolism. The piRNA metabolic process mediates the repression of transposable elements during meiosis by forming complexes composed of piRNAs and Piwi proteins and governs the methylation and subsequent repression of transposons, which is essential for the germline integrity. Transcriptional activator of SOX30. The protein is Myb-related protein A (MYBL1) of Homo sapiens (Human).